The chain runs to 858 residues: GDP-fucose protein O-fucosyltransferase 2 (858 aa).

The Cytoplasmic portion of the chain corresponds to 1–150 (MHCQLGGQAR…RPPCLLNHRR (150 aa)). A helical; Signal-anchor for type II membrane protein membrane pass occupies residues 151–171 (LLLGLVSVLTVFLSCLPFTNA). Residues 172–858 (TVSPAALQDV…WPSLDPSSTL (687 aa)) are Lumenal-facing. 237–241 (GEGFH) lines the GDP-beta-L-fucose pocket. The Proton acceptor role is filled by Glu238. Residues 448-510 (AALTPQERQR…SRSRKEIQEE (63 aa)) form a disordered region. The segment covering 486–510 (DGEREKRKPGRRSDTSRSRKEIQEE) has biased composition (basic and acidic residues). Residues 646–648 (HLR) and 787–788 (RF) contribute to the GDP-beta-L-fucose site. The tract at residues 819–858 (TGGQAQGKCFATKSHDPPEGRSRSELRRKYWPSLDPSSTL) is disordered. The segment covering 831 to 846 (KSHDPPEGRSRSELRR) has biased composition (basic and acidic residues).

It belongs to the glycosyltransferase 68 family.

The protein resides in the endoplasmic reticulum membrane. The catalysed reaction is L-seryl-[protein] + GDP-beta-L-fucose = 3-O-(alpha-L-fucosyl)-L-seryl-[protein] + GDP + H(+). It carries out the reaction L-threonyl-[protein] + GDP-beta-L-fucose = 3-O-(alpha-L-fucosyl)-L-threonyl-[protein] + GDP + H(+). Its pathway is protein modification; protein glycosylation. Functionally, catalyzes the reaction that attaches fucose through an O-glycosidic linkage to a conserved serine or threonine residue in the consensus sequence C1-X-X-S/T-C2 of thrombospondin type I repeats (TSRs) where C1 and C2 are the first and second cysteines of the repeat, respectively. O-fucosylates microneme protein MIC2 and may play a role in its stabilization. Probably by regulating protein O-fucosylation, may play a role in tachyzoite adhesion to and/or invasion of host cells; however, POFUT2 involvement in adhesion/invasion is controversial. This is GDP-fucose protein O-fucosyltransferase 2 from Toxoplasma gondii (strain ATCC 50853 / GT1).